The following is a 226-amino-acid chain: Phosphoglycolate phosphatase (226 aa).

Residue aspartate 12 is the Nucleophile of the active site. Aspartate 12, aspartate 14, and aspartate 177 together coordinate Mg(2+).

The protein belongs to the HAD-like hydrolase superfamily. CbbY/CbbZ/Gph/YieH family. Requires Mg(2+) as cofactor.

The enzyme catalyses 2-phosphoglycolate + H2O = glycolate + phosphate. It participates in organic acid metabolism; glycolate biosynthesis; glycolate from 2-phosphoglycolate: step 1/1. Specifically catalyzes the dephosphorylation of 2-phosphoglycolate. Is involved in the dissimilation of the intracellular 2-phosphoglycolate formed during the DNA repair of 3'-phosphoglycolate ends, a major class of DNA lesions induced by oxidative stress. This chain is Phosphoglycolate phosphatase, found in Colwellia psychrerythraea (strain 34H / ATCC BAA-681) (Vibrio psychroerythus).